The following is a 410-amino-acid chain: Mitochondrial potassium channel (410 aa).

A mitochondrion-targeting transit peptide spans 1 to 35 (MTGCSPVFTMQQVVGVSHRLVWRTFRGTDLLMTRT). Residues 36 to 201 (LCSPGPSRPG…KERTRAERTK (166 aa)) are Mitochondrial matrix-facing. Positions 116-143 (VREAREDLEAQQTKLKEVRDRLDRVSRE) form a coiled coil. The chain crosses the membrane as a helical span at residues 202–222 (NWSLIGSVLGALIGVAGSTYV). Topologically, residues 223–385 (NRVRLQELKA…RLEAQANRNA (163 aa)) are mitochondrial intermembrane. A disordered region spans residues 276–296 (GQDQGSGSPTGPSSPRGKDID). The segment covering 280–290 (GSGSPTGPSSP) has biased composition (low complexity). A helical membrane pass occupies residues 386–406 (ISSTLVTCVTFMATLPLLYML). Over 407 to 410 (FKTS) the chain is Mitochondrial matrix.

As to quaternary structure, the mitochondrial potassium channel (mitoK(ATP)) forms a heteromultimer.

The protein resides in the mitochondrion inner membrane. The catalysed reaction is K(+)(in) = K(+)(out). Its activity is regulated as follows. Channel activity inhibited by ATP via ABCB8/MITOSUR subunit. Pore-forming subunit of the mitochondrial ATP-gated potassium channel (mitoK(ATP)). Together with ATP-binding subunit ABCB8/MITOSUR of the mitoK(ATP) channel, mediates ATP-dependent K(+) currents across the mitochondrial inner membrane. An increase in ATP intracellular levels closes the channel, inhibiting K(+) transport, whereas a decrease in ATP levels enhances K(+) uptake in the mitochondrial matrix. May contribute to the homeostatic control of cellular metabolism under stress conditions by regulating the mitochondrial matrix volume. The sequence is that of Mitochondrial potassium channel from Rattus norvegicus (Rat).